We begin with the raw amino-acid sequence, 293 residues long: Group 3 late-embryogenesis abundant protein, mitochondrial (293 aa).

The N-terminal 31 residues, 1 to 31 (MFLARNAGRAGYRGVVAYQQAASFSVSSAKA), are a transit peptide targeting the mitochondrion. Positions 27 to 43 (SSAKAAGSRSSGGSDAG) are enriched in low complexity. The disordered stretch occupies residues 27 to 52 (SSAKAAGSRSSGGSDAGDYAREAAEH). LEA 11-mer repeat repeat units follow at residues 58-68 (KDLKNEASWKA), 83-93 (KDTVKEGVHDM), 123-133 (KNAAQDTAATL), 134-144 (KDKAGSAWNQA), 145-155 (KHVVEDKGEDV), 160-170 (KDTASKVWGKA), 171-181 (KHVAEDVKENA), 199-209 (KDKAADVLSGA), and 210-220 (KHTAENLAHKA). The segment at 217–293 (AHKAQAAIHD…KGPGQAGGRR (77 aa)) is disordered. A compositionally biased stretch (low complexity) spans 230 to 265 (SSGSQSQSQSQSQYRQGQQQGRQDQQQSKSQWGQTS). Gly residues predominate over residues 279–293 (GPQGGKGPGQAGGRR).

Belongs to the LEA type 4 family.

The protein resides in the mitochondrion. Its function is as follows. Mitochondrial heat soluble protein acting as a molecular shield in water-deficient condition. The sequence is that of Group 3 late-embryogenesis abundant protein, mitochondrial from Ramazzottius varieornatus (Water bear).